Reading from the N-terminus, the 218-residue chain is Deoxyribose-phosphate aldolase (218 aa).

Residue D92 is the Proton donor/acceptor of the active site. Catalysis depends on K156, which acts as the Schiff-base intermediate with acetaldehyde. Residue K185 is the Proton donor/acceptor of the active site.

It belongs to the DeoC/FbaB aldolase family. DeoC type 1 subfamily.

It is found in the cytoplasm. It carries out the reaction 2-deoxy-D-ribose 5-phosphate = D-glyceraldehyde 3-phosphate + acetaldehyde. The protein operates within carbohydrate degradation; 2-deoxy-D-ribose 1-phosphate degradation; D-glyceraldehyde 3-phosphate and acetaldehyde from 2-deoxy-alpha-D-ribose 1-phosphate: step 2/2. Its function is as follows. Catalyzes a reversible aldol reaction between acetaldehyde and D-glyceraldehyde 3-phosphate to generate 2-deoxy-D-ribose 5-phosphate. The sequence is that of Deoxyribose-phosphate aldolase from Desulfitobacterium hafniense (strain DSM 10664 / DCB-2).